A 573-amino-acid chain; its full sequence is 60 kDa heat shock protein, mitochondrial (573 aa).

Residues 1-26 (MLRLPTVLRQMRPVSRALAPHLTRAY) constitute a mitochondrion transit peptide. An N6-succinyllysine modification is found at Lys-31. Phosphoserine occurs at positions 67 and 70. An ATP-binding site is contributed by Lys-75. Lys-75 carries the post-translational modification N6-acetyllysine. Lys-82 carries the N6-acetyllysine; alternate modification. Lys-82 carries the post-translational modification N6-succinyllysine; alternate. Lys-87 carries the N6-acetyllysine modification. Tyr-90 carries the post-translational modification Phosphotyrosine. An N6-acetyllysine modification is found at Lys-91. Residue 111–115 (DGTTT) participates in ATP binding. Lys-125 is modified (N6-acetyllysine; alternate). Lys-125 carries the N6-succinyllysine; alternate modification. Lys-130 carries the post-translational modification N6-acetyllysine. Lys-133 is subject to N6-acetyllysine; alternate. Lys-133 carries the post-translational modification N6-succinyllysine; alternate. Lys-133 carries the post-translational modification N6-malonyllysine; alternate. Lys-156 is subject to N6-acetyllysine. Residues Lys-191, Lys-202, Lys-205, Lys-218, and Lys-236 each carry the N6-acetyllysine; alternate modification. Residues Lys-191, Lys-202, Lys-205, Lys-218, and Lys-236 each carry the N6-succinyllysine; alternate modification. Position 249 is an N6-acetyllysine (Lys-249). Lys-250 is modified (N6-acetyllysine; alternate). Residue Lys-250 is modified to N6-succinyllysine; alternate. N6-acetyllysine is present on residues Lys-269 and Lys-292. Lys-301 carries the post-translational modification N6-succinyllysine. Lys-314 carries the N6-acetyllysine modification. Residue Lys-352 is modified to N6-acetyllysine; alternate. Lys-352 carries the post-translational modification N6-succinyllysine; alternate. An N6-acetyllysine mark is found at Lys-359 and Lys-389. Lys-396 is modified (N6-acetyllysine; alternate). N6-succinyllysine; alternate is present on Lys-396. Ser-410 is modified (phosphoserine). Gly-440 serves as a coordination point for ATP. Lys-455 carries the N6-acetyllysine; alternate modification. Lys-455 is modified (N6-succinyllysine; alternate). Lys-469 carries the N6-acetyllysine modification. At Lys-481 the chain carries N6-acetyllysine; alternate. At Lys-481 the chain carries N6-succinyllysine; alternate. Ser-488 bears the Phosphoserine mark. Asp-520 is a binding site for ATP. Lys-551 is covalently cross-linked (Glycyl lysine isopeptide (Lys-Gly) (interchain with G-Cter in SUMO2)).

This sequence belongs to the chaperonin (HSP60) family. Homoheptamer arranged in a ring structure. The functional units of these chaperonins consist of heptameric rings of the large subunit Hsp60, which function as a back-to-back double ring. Interacts with 2 heptameric Hsp10 rings to form the symmetrical football complex. Interacts with HRAS. Interacts with ATAD3A. Interacts with ETFBKMT and EEF1AKMT3. Interacts with MFHAS1.

Its subcellular location is the mitochondrion matrix. The enzyme catalyses ATP + H2O + a folded polypeptide = ADP + phosphate + an unfolded polypeptide.. Its function is as follows. Chaperonin implicated in mitochondrial protein import and macromolecular assembly. Together with Hsp10, facilitates the correct folding of imported proteins. May also prevent misfolding and promote the refolding and proper assembly of unfolded polypeptides generated under stress conditions in the mitochondrial matrix. The functional units of these chaperonins consist of heptameric rings of the large subunit Hsp60, which function as a back-to-back double ring. In a cyclic reaction, Hsp60 ring complexes bind one unfolded substrate protein per ring, followed by the binding of ATP and association with 2 heptameric rings of the co-chaperonin Hsp10. This leads to sequestration of the substrate protein in the inner cavity of Hsp60 where, for a certain period of time, it can fold undisturbed by other cell components. Synchronous hydrolysis of ATP in all Hsp60 subunits results in the dissociation of the chaperonin rings and the release of ADP and the folded substrate protein. This chain is 60 kDa heat shock protein, mitochondrial (Hspd1), found in Rattus norvegicus (Rat).